The chain runs to 170 residues: Protein ripply3 (170 aa).

The short motif at 40 to 43 (WRPW) is the WRPW motif element. Over residues 51-61 (ELDGQQRRSGE) the composition is skewed to basic and acidic residues. Residues 51-78 (ELDGQQRRSGEADGVPTNTGPKGALGFQ) are disordered. The interval 79 to 114 (HPVRLYMPKSKTSEYLQHMGRKVLASFPVQATIHFY) is ripply homology domain. Over residues 142 to 155 (GVDSSRGSSDNYSV) the composition is skewed to polar residues. The segment at 142–170 (GVDSSRGSSDNYSVQGGPKRNIGSHAGSA) is disordered.

This sequence belongs to the ripply family. In terms of assembly, interacts with tbx1 and tle4/grg4. At neurula stage, expressed in the region close to the heart mesoderm. At the tailbud stage, expressed in the pharyngeal region.

It localises to the nucleus. Its function is as follows. Acts as a transcriptional corepressor. Negative regulator of the transcriptional activity of tbx1 that plays a key role in pharyngeal development. Plays a role in the formation of the anteroposterior (AP) axis during embryonic development; required to establish the posterolateral border of the pre-placodal ectoderm (PPE) acting downstream of the retinoic acid receptor (RAR) signaling. This Xenopus laevis (African clawed frog) protein is Protein ripply3 (ripply3).